The sequence spans 120 residues: Small ribosomal subunit protein uS13 (120 aa).

The segment at glycine 94–lysine 120 is disordered.

This sequence belongs to the universal ribosomal protein uS13 family. Part of the 30S ribosomal subunit. Forms a loose heterodimer with protein S19. Forms two bridges to the 50S subunit in the 70S ribosome.

Its function is as follows. Located at the top of the head of the 30S subunit, it contacts several helices of the 16S rRNA. In the 70S ribosome it contacts the 23S rRNA (bridge B1a) and protein L5 of the 50S subunit (bridge B1b), connecting the 2 subunits; these bridges are implicated in subunit movement. Contacts the tRNAs in the A and P-sites. In Aromatoleum aromaticum (strain DSM 19018 / LMG 30748 / EbN1) (Azoarcus sp. (strain EbN1)), this protein is Small ribosomal subunit protein uS13.